The following is a 307-amino-acid chain: Fe-S cluster assembly protein dre2 (307 aa).

2 disordered regions span residues 1 to 26 (MTPV…PSTS) and 159 to 179 (KKKK…VGFV). Positions 15–26 (AAPPTKTAPSTS) are enriched in low complexity. The interval 23–152 (PSTSTRTLLL…EKPAYQEAAV (130 aa)) is N-terminal SAM-like domain. Residues 153–197 (PLRLGGKKKKAPAPTEQPPVATGVGFVDGNDELIDEDDLLSDDDL) form a linker region. Positions 207, 219, 222, and 224 each coordinate [2Fe-2S] cluster. The interval 207–224 (CQPEKAKKRRRPCKDCTC) is fe-S binding site A. [4Fe-4S] cluster is bound by residues Cys-270, Cys-273, Cys-281, and Cys-284. Short sequence motifs (cx2C motif) lie at residues 270–273 (CNSC) and 281–284 (CSSC). Residues 270–284 (CNSCSLGDAFRCSSC) are fe-S binding site B.

The protein belongs to the anamorsin family. Monomer. Interacts with tah18. Interacts with mia40. The cofactor is [2Fe-2S] cluster. It depends on [4Fe-4S] cluster as a cofactor.

The protein resides in the cytoplasm. Its subcellular location is the mitochondrion intermembrane space. In terms of biological role, component of the cytosolic iron-sulfur (Fe-S) protein assembly (CIA) machinery required for the maturation of extramitochondrial Fe-S proteins. Part of an electron transfer chain functioning in an early step of cytosolic Fe-S biogenesis, facilitating the de novo assembly of a [4Fe-4S] cluster on the scaffold complex cfd1-nbp35. Electrons are transferred to dre2 from NADPH via the FAD- and FMN-containing protein tah18. Tah18-dre2 are also required for the assembly of the diferric tyrosyl radical cofactor of ribonucleotide reductase (RNR), probably by providing electrons for reduction during radical cofactor maturation in the catalytic small subunit rnr2. The polypeptide is Fe-S cluster assembly protein dre2 (Aspergillus terreus (strain NIH 2624 / FGSC A1156)).